Consider the following 632-residue polypeptide: Putative golgin subfamily A member 8I (632 aa).

The tract at residues 1-77 is disordered; it reads MAEETQHNKL…SSATLKDLES (77 aa). A compositionally biased stretch (polar residues) spans 38 to 50; it reads TNGSIPQTATSGG. Coiled coils occupy residues 86–154 and 209–421; these read LDSR…HMKR and KLEQ…SLMA. The segment covering 352 to 362 has biased composition (basic and acidic residues); that stretch reads KQEERIQEQHK. 4 disordered regions span residues 352 to 383, 423 to 445, 496 to 524, and 550 to 569; these read KQEE…ENKS, PGEG…PMPS, LSEP…DEGE, and AHNP…ELGA. The span at 508-520 shows a compositional bias: gly residues; it reads LGGGHHQAGAQGG. Residues 529 to 632 are golgi-targeting domain; sequence AADGIAAYSN…CWAWLPRRRR (104 aa). Low complexity predominate over residues 555-568; the sequence is DEPGPGAPAPQELG.

Belongs to the GOLGA8 family.

It is found in the golgi apparatus. It localises to the golgi stack membrane. May be involved in maintaining Golgi structure. This Homo sapiens (Human) protein is Putative golgin subfamily A member 8I.